Here is a 239-residue protein sequence, read N- to C-terminus: Ribonuclease 3 (239 aa).

Residues 11 to 133 (HTAIQKKLGY…MFAAVSFDAD (123 aa)) form the RNase III domain. Residue E46 participates in Mg(2+) binding. D50 is an active-site residue. The Mg(2+) site is built by D119 and E122. Residue E122 is part of the active site. The DRBM domain maps to 160-230 (DGKTALQEAL…AKEALKWLEE (71 aa)).

The protein belongs to the ribonuclease III family. Homodimer. Mg(2+) is required as a cofactor.

It is found in the cytoplasm. It carries out the reaction Endonucleolytic cleavage to 5'-phosphomonoester.. Digests double-stranded RNA. Involved in the processing of primary rRNA transcript to yield the immediate precursors to the large and small rRNAs (23S and 16S). Processes some mRNAs, and tRNAs when they are encoded in the rRNA operon. Processes pre-crRNA and tracrRNA of type II CRISPR loci if present in the organism. In Neisseria gonorrhoeae (strain NCCP11945), this protein is Ribonuclease 3.